Consider the following 570-residue polypeptide: Methionine--tRNA ligase (570 aa).

Residues 11–21 (PYVQTVPHLGN) carry the 'HIGH' region motif. Cys143, Cys146, Cys156, and Cys159 together coordinate Zn(2+). The short motif at 333–337 (KFSKS) is the 'KMSKS' region element. Lys336 serves as a coordination point for ATP.

This sequence belongs to the class-I aminoacyl-tRNA synthetase family. MetG type 1 subfamily. Zn(2+) is required as a cofactor.

Its subcellular location is the cytoplasm. The catalysed reaction is tRNA(Met) + L-methionine + ATP = L-methionyl-tRNA(Met) + AMP + diphosphate. Is required not only for elongation of protein synthesis but also for the initiation of all mRNA translation through initiator tRNA(fMet) aminoacylation. In Pyrobaculum aerophilum (strain ATCC 51768 / DSM 7523 / JCM 9630 / CIP 104966 / NBRC 100827 / IM2), this protein is Methionine--tRNA ligase.